The chain runs to 278 residues: Large ribosomal subunit protein uL2 (278 aa).

Positions 222–264 are disordered; it reads GVAMNPIDHPHGGGEGRTSGGRHPVTPWGKPTKGRKTRKNKAT.

This sequence belongs to the universal ribosomal protein uL2 family. Part of the 50S ribosomal subunit. Forms a bridge to the 30S subunit in the 70S ribosome.

In terms of biological role, one of the primary rRNA binding proteins. Required for association of the 30S and 50S subunits to form the 70S ribosome, for tRNA binding and peptide bond formation. It has been suggested to have peptidyltransferase activity; this is somewhat controversial. Makes several contacts with the 16S rRNA in the 70S ribosome. In Phenylobacterium zucineum (strain HLK1), this protein is Large ribosomal subunit protein uL2.